Here is a 363-residue protein sequence, read N- to C-terminus: Pyrimidine monooxygenase RutA (363 aa).

Residues I49–K50, N115, E124, R140–Y141, and S190 contribute to the FMN site.

The protein belongs to the NtaA/SnaA/DszA monooxygenase family. RutA subfamily.

The enzyme catalyses uracil + FMNH2 + NADH + O2 = (Z)-3-ureidoacrylate + FMN + NAD(+) + H2O + H(+). It catalyses the reaction thymine + FMNH2 + NADH + O2 = (Z)-2-methylureidoacrylate + FMN + NAD(+) + H2O + H(+). Its function is as follows. Catalyzes the pyrimidine ring opening between N-3 and C-4 by an unusual flavin hydroperoxide-catalyzed mechanism, adding oxygen atoms in the process to yield ureidoacrylate peracid, that immediately reacts with FMN forming ureidoacrylate and FMN-N(5)-oxide. The FMN-N(5)-oxide reacts spontaneously with NADH to produce FMN. Requires the flavin reductase RutF to regenerate FMN in vivo. This is Pyrimidine monooxygenase RutA from Escherichia coli (strain SMS-3-5 / SECEC).